The following is a 113-amino-acid chain: U11-theraphotoxin-Hhn1a (113 aa).

The N-terminal stretch at 1-21 (MNTVRVAFLLVFVLAVSLGQA) is a signal peptide. Positions 22-74 (DKDENRMEMQEKTEQGKSYLDFAENLLLQKLEEPEAKLLEEDSEESRNSRQKR) are excised as a propeptide. Basic and acidic residues predominate over residues 58–69 (KLLEEDSEESRN). A disordered region spans residues 58–83 (KLLEEDSEESRNSRQKRCIGEGVPCD). 3 disulfides stabilise this stretch: Cys75/Cys90, Cys82/Cys95, and Cys89/Cys110.

The protein belongs to the neurotoxin 14 (magi-1) family. 01 (HNTX-16) subfamily. As to expression, expressed by the venom gland.

It localises to the secreted. Its function is as follows. Probable ion channel inhibitor. The protein is U11-theraphotoxin-Hhn1a of Cyriopagopus hainanus (Chinese bird spider).